The primary structure comprises 128 residues: Aspartate 1-decarboxylase (128 aa).

Serine 25 acts as the Schiff-base intermediate with substrate; via pyruvic acid in catalysis. Serine 25 is subject to Pyruvic acid (Ser). Threonine 57 serves as a coordination point for substrate. The active-site Proton donor is the tyrosine 58. 73-75 is a binding site for substrate; sequence GAA.

This sequence belongs to the PanD family. In terms of assembly, heterooctamer of four alpha and four beta subunits. Pyruvate serves as cofactor. In terms of processing, is synthesized initially as an inactive proenzyme, which is activated by self-cleavage at a specific serine bond to produce a beta-subunit with a hydroxyl group at its C-terminus and an alpha-subunit with a pyruvoyl group at its N-terminus.

It is found in the cytoplasm. The enzyme catalyses L-aspartate + H(+) = beta-alanine + CO2. It functions in the pathway cofactor biosynthesis; (R)-pantothenate biosynthesis; beta-alanine from L-aspartate: step 1/1. Catalyzes the pyruvoyl-dependent decarboxylation of aspartate to produce beta-alanine. This is Aspartate 1-decarboxylase from Ruminiclostridium cellulolyticum (strain ATCC 35319 / DSM 5812 / JCM 6584 / H10) (Clostridium cellulolyticum).